The primary structure comprises 21 residues: Cyanophlyctin (21 aa).

As to expression, expressed by the skin glands.

The protein resides in the secreted. Has antibacterial activity against E.coli HP101BA (MIC=6.4 uM), K.pneumoniae PTCC1388 (MIC=7.3 uM), M.luteus PTCC1625 (MIC=4.7 uM) and S.aureus PTCC1431 (MIC=5.3 uM). Has no or very limited (&lt;3%) hemolytic activity at concentrations of 15 ug/ml and 60 ug/ml, respectively. This Euphlyctis cyanophlyctis (Skittering frog) protein is Cyanophlyctin.